We begin with the raw amino-acid sequence, 904 residues long: Alanine--tRNA ligase (904 aa).

Zn(2+) is bound by residues His-584, His-588, Cys-687, and His-691.

This sequence belongs to the class-II aminoacyl-tRNA synthetase family. It depends on Zn(2+) as a cofactor.

The protein localises to the cytoplasm. It carries out the reaction tRNA(Ala) + L-alanine + ATP = L-alanyl-tRNA(Ala) + AMP + diphosphate. In terms of biological role, catalyzes the attachment of alanine to tRNA(Ala) in a two-step reaction: alanine is first activated by ATP to form Ala-AMP and then transferred to the acceptor end of tRNA(Ala). Also edits incorrectly charged Ser-tRNA(Ala) and Gly-tRNA(Ala) via its editing domain. This chain is Alanine--tRNA ligase, found in Mycobacterium tuberculosis (strain ATCC 25177 / H37Ra).